Here is a 1057-residue protein sequence, read N- to C-terminus: Desmoglein-1-alpha (1057 aa).

Residues Met1–Ser23 form the signal peptide. The propeptide occupies Glu24–Arg49. 4 consecutive Cadherin domains span residues Glu50–Phe157, Ser158–Leu269, Glu270–Ser389, and Arg386–Glu493. The Extracellular segment spans residues Glu50–Pro564. N-linked (GlcNAc...) asparagine glycosylation is found at Asn110 and Asn180. Residues Thr490 to Glu552 form a disordered region. A compositionally biased stretch (polar residues) spans Asn510–Thr525. Residues Ala565–Ile585 traverse the membrane as a helical segment. Residues Cys586–Lys1057 are Cytoplasmic-facing. 5 Desmoglein repeat repeats span residues Ala832–Glu858, Ser859–Val888, Gly889–Ile918, Ala919–Ile946, and Gln947–Val975.

In terms of assembly, binds to JUP/plakoglobin. Interacts with PKP2. Interacts with DSC3; there is evidence to suggest that the interaction promotes cell-cell adhesion of keratinocytes. In terms of tissue distribution, expressed in testis.

The protein resides in the cell membrane. It localises to the cell junction. It is found in the desmosome. Its subcellular location is the cytoplasm. The protein localises to the nucleus. Its function is as follows. Component of intercellular desmosome junctions. Involved in the interaction of plaque proteins and intermediate filaments mediating cell-cell adhesion. The chain is Desmoglein-1-alpha (Dsg1a) from Mus musculus (Mouse).